Here is a 330-residue protein sequence, read N- to C-terminus: Bifunctional pinoresinol-lariciresinol reductase 2 (330 aa).

NADP(+) is bound by residues 28-34 (GGTGYLG), arginine 53, and lysine 62. Residue lysine 156 is the Proton acceptor of the active site. Arginine 160 provides a ligand contact to NADP(+). Residue histidine 288 coordinates substrate.

The protein belongs to the NmrA-type oxidoreductase family. Isoflavone reductase subfamily. Dimer. As to expression, expressed in leaves, stems, leaves and seeds.

The enzyme catalyses (+)-lariciresinol + NADP(+) = (+)-pinoresinol + NADPH + H(+). It catalyses the reaction (-)-secoisolariciresinol + NADP(+) = (+)-lariciresinol + NADPH + H(+). In terms of biological role, reductase involved in lignan biosynthesis. Catalyzes the enantioselective conversion of (+)-pinoresinol into (+)-lariciresinol and of (+)-lariciresinol into (-)-secoisolariciresinol. Abstracts the 4R-hydride from the NADPH cofactor during catalysis. This chain is Bifunctional pinoresinol-lariciresinol reductase 2 (PLR_Lu2), found in Linum usitatissimum (Flax).